The sequence spans 392 residues: uncharacterized protein (392 aa).

The protein belongs to the chlamydial CPn_0675/CT_696/TC_0068 family.

This is an uncharacterized protein from Chlamydia muridarum (strain MoPn / Nigg).